Reading from the N-terminus, the 823-residue chain is MTRRRSRPSGGAGRRERARATGPQKPQAPEPPPPPSLEAGAGAGPPEAPAEPYRDDPREEDEPKLAPGPQVPPTTSQSVQTCCLLCHRERKGWEEGPSQNGLVLQGEKLPPDFMPKLVKNLLGEMPLWVCQSCRKSMEEDERQTGREHAVAISLSHTSCKSQSCGGDSHSSSSSSSSSSSSSSSCHGNSGDWDPSSFLSAHKLSGLWNSPHSSGAMPGGSLGSPPTIPGEVFPISEHHRHSDLTAPPNSPTGHHPQPAPLIPSHPGSFGSPPHPHLLPTTPAVHFPAQVSECPVAVAAAPHTPGPCQSPHLPSTSMPLLKMPPPFSGCSHPCSGHCSGHCSGPLLPPPSSQQLPSTHSRDPGCKGHKFTHSGLTCQLPQPCEADEGLGEEEDSSSERSSCTSSSTHQRDGKFCDCCYCEFFGHNAEKEKAQLAAEALKQANRSVSGSRELRPARESLLGWPDRELDRVNSFLNSRLQEIKNTVKDSICASFSMCELSVDSNGFSKEGATEPKPQSLAPSNPSGSSEQRPDINLDLSPLTLGSPQNHMLQAPGEPAPPWAEMRSPHPPWTEVKGPPPGIIPENGLVRRLNTVPNLSRMIWVKTPKPGNPSSEEPSIKGAPGCKQELPEPVASGGKPRKGKRQGNQAKKSEVSPASQSPACLETPSAKGQTPSPKQPSKAPEPPRVDSCAEAGEGSQGTRPGPGWADSPKADKEKGNSWRNWPGEAKARPLEQESVQPPGPARPQSFQQGKGRSRRSRNKQEKSASSLDDVFLPKDMDGVEMDETDREVEYFKRFCLDSAKQTRQKVAVNWTNFSLKKTTPSTAQ.

Disordered regions lie at residues 1-78 (MTRR…TSQS), 158-191 (SCKSQSCGGDSHSSSSSSSSSSSSSSSCHGNSGD), 209-281 (SPHS…PTTP), and 381-409 (CEADEGLGEEEDSSSERSSCTSSSTHQRD). Positions 26-36 (PQAPEPPPPPS) are enriched in pro residues. A compositionally biased stretch (basic and acidic residues) spans 52–64 (PYRDDPREEDEPK). Composition is skewed to low complexity over residues 168–184 (SHSSSSSSSSSSSSSSS) and 263–281 (SHPGSFGSPPHPHLLPTTP). Residues 382-393 (EADEGLGEEEDS) are compositionally biased toward acidic residues. Residues 422–484 (GHNAEKEKAQ…RLQEIKNTVK (63 aa)) adopt a coiled-coil conformation. 2 disordered regions span residues 503-583 (FSKE…PENG) and 599-775 (WVKT…PKDM). 2 stretches are compositionally biased toward polar residues: residues 516–526 (LAPSNPSGSSE) and 641–657 (QGNQAKKSEVSPASQSP). Residues serine 694, serine 706, and serine 813 each carry the phosphoserine modification.

Belongs to the FAM193 family.

Its subcellular location is the cytoplasm. The protein localises to the nucleus. The sequence is that of Protein FAM193B (FAM193B) from Bos taurus (Bovine).